The sequence spans 198 residues: Imidazoleglycerol-phosphate dehydratase (198 aa).

This sequence belongs to the imidazoleglycerol-phosphate dehydratase family.

The protein localises to the cytoplasm. It catalyses the reaction D-erythro-1-(imidazol-4-yl)glycerol 3-phosphate = 3-(imidazol-4-yl)-2-oxopropyl phosphate + H2O. It functions in the pathway amino-acid biosynthesis; L-histidine biosynthesis; L-histidine from 5-phospho-alpha-D-ribose 1-diphosphate: step 6/9. This is Imidazoleglycerol-phosphate dehydratase from Nitratidesulfovibrio vulgaris (strain DP4) (Desulfovibrio vulgaris).